Reading from the N-terminus, the 678-residue chain is Penicillin-binding protein activator LpoA (678 aa).

The signal sequence occupies residues 1–26 (MVPSTFSRLKAARCLPVVLAALIFAG). C27 carries the N-palmitoyl cysteine lipid modification. Residue C27 is the site of S-diacylglycerol cysteine attachment. Low complexity-rich tracts occupy residues 300 to 310 (AADVAEQPQPQ), 330 to 340 (QPAAQPVPVSA), and 513 to 528 (TTNN…DDQF). Disordered stretches follow at residues 300–340 (AADV…PVSA) and 496–528 (ALTG…DDQF).

It belongs to the LpoA family. Interacts with PBP1a.

The protein localises to the cell outer membrane. Regulator of peptidoglycan synthesis that is essential for the function of penicillin-binding protein 1A (PBP1a). The chain is Penicillin-binding protein activator LpoA from Shigella flexneri serotype 5b (strain 8401).